We begin with the raw amino-acid sequence, 377 residues long: All-trans-retinol dehydrogenase [NAD(+)] ADH4 (377 aa).

A Zn(2+)-binding site is contributed by Cys47. Thr49 contacts NAD(+). Zn(2+) is bound by residues His68, Cys98, Cys101, Cys104, Cys112, and Cys179. Residues Gly204 to Gly209, Asp228, Lys233, Val297 to Ala299, Thr320 to Phe322, and Arg372 each bind NAD(+).

It belongs to the zinc-containing alcohol dehydrogenase family. Class-II subfamily. As to quaternary structure, dimer. Requires Zn(2+) as cofactor. In terms of tissue distribution, liver specific.

It localises to the cytoplasm. It carries out the reaction all-trans-retinol + NAD(+) = all-trans-retinal + NADH + H(+). The catalysed reaction is 9-cis-retinol + NAD(+) = 9-cis-retinal + NADH + H(+). It catalyses the reaction 20-hydroxy-(5Z,8Z,11Z,14Z)-eicosatetraenoate + NAD(+) = 20-oxo-(5Z,8Z,11Z,14Z)-eicosatetraenoate + NADH + H(+). The enzyme catalyses 20-oxo-(5Z,8Z,11Z,14Z)-eicosatetraenoate + NAD(+) + H2O = (5Z,8Z,11Z,14Z)-eicosatetraenedioate + NADH + 2 H(+). It carries out the reaction 1,4-benzoquinone + NADH + H(+) = hydroquinone + NAD(+). Oxidation of 20-HETE is inhibited by low concentrations of N-heptylformamide. Oxidation of 20-HETE is a decreased by 55-65% by either all-trans-retinol or all-trans-retinoic acid. Strongly inhibited by omega-hydroxy fatty acids. Its function is as follows. Catalyzes the NAD-dependent oxidation of either all-trans-retinol or 9-cis-retinol. Also oxidizes long chain omega-hydroxy fatty acids, such as 20-HETE, producing both the intermediate aldehyde, 20-oxoarachidonate and the end product, a dicarboxylic acid, (5Z,8Z,11Z,14Z)-eicosatetraenedioate. Also catalyzes the reduction of benzoquinones. The sequence is that of All-trans-retinol dehydrogenase [NAD(+)] ADH4 from Mus musculus (Mouse).